A 376-amino-acid chain; its full sequence is Putative endoglucanase type K (376 aa).

An N-terminal signal peptide occupies residues methionine 1–alanine 18. A catalytic region spans residues serine 19–lysine 308. Residue aspartate 29 is the Nucleophile of the active site. Catalysis depends on aspartate 140, which acts as the Proton donor. A disordered region spans residues alanine 229–alanine 332. Composition is skewed to low complexity over residues serine 235 to glutamine 258 and lysine 291 to valine 306. A linker region spans residues proline 309–proline 338. The 40-residue stretch at serine 335–valine 374 folds into the CBM1 domain.

The protein belongs to the glycosyl hydrolase 45 (cellulase K) family.

The enzyme catalyses Endohydrolysis of (1-&gt;4)-beta-D-glucosidic linkages in cellulose, lichenin and cereal beta-D-glucans.. The protein is Putative endoglucanase type K of Fusarium oxysporum (Fusarium vascular wilt).